Here is a 444-residue protein sequence, read N- to C-terminus: Cop9 signalosome complex subunit 11 (444 aa).

Residues 195 to 367 (FFTMMTSEPL…IHFEDSSILQ (173 aa)) form the PCI domain. The segment at 419–439 (SSDDMDIDEVNDRSDISDSEG) is disordered.

Component of a COP9 signalosome-like (CSN) complex, composed of RRI1/CSN5, CSN9, RRI2/CSN10, PCI8/CSN11, CSN12 and CSI1. Interacts with PRT1 and RPG1, 2 subunits of the core complex of translation initiation factor 3 (eIF3).

It is found in the cytoplasm. It localises to the nucleus. Its function is as follows. Component of the COP9 signalosome (CSN) complex that acts as an regulator of the ubiquitin (Ubl) conjugation pathway by mediating the deneddylation of the cullin subunit of SCF-type E3 ubiquitin-protein ligase complexes The CSN complex is involved in the regulation of the mating pheromone response. PCI8 may also be involved in transcriptional and translational control. The chain is Cop9 signalosome complex subunit 11 (PCI8) from Saccharomyces cerevisiae (strain ATCC 204508 / S288c) (Baker's yeast).